Reading from the N-terminus, the 523-residue chain is Synaptotagmin-10 (523 aa).

Topologically, residues 1–55 (MSFHKEDGVNSLCQKALHIVTELCFAGQVEWEKCSGIFPRDRGSQGGSSTDISVS) are vesicular. A cysteine motif region spans residues 13 to 35 (CQKALHIVTELCFAGQVEWEKCS). A helical transmembrane segment spans residues 56–76 (LLAVVVSFCGLALLVVSLFVF). The Cytoplasmic portion of the chain corresponds to 77-523 (WKLCWPCWKS…CPSPKPPSTP (447 aa)). T136 carries the phosphothreonine modification. 2 consecutive C2 domains span residues 231–352 (ICGK…TVWK) and 363–496 (DLGE…THWH). D262, D268, D320, F321, D322, S325, D328, D394, D400, D454, and D456 together coordinate Ca(2+).

The protein belongs to the synaptotagmin family. As to quaternary structure, homodimer; disulfide-linked via the cysteine motif. Can also form heterodimers with SYT3, SYT6, SYT7 and SYT9. Requires Ca(2+) as cofactor.

It is found in the cytoplasmic vesicle. The protein resides in the secretory vesicle membrane. Its function is as follows. Ca(2+) sensor specifically required for the Ca(2+)-dependent exocytosis of secretory vesicles containing IGF1 in neurons of the olfactory bulb. Exocytosis of IGF1 is required for sensory perception of smell. Not involved in Ca(2+)-dependent synaptic vesicle exocytosis. Acts through Ca(2+) and phospholipid binding to the C2 domain: Ca(2+) induces binding of the C2-domains to phospholipid membranes and to assembled SNARE-complexes; both actions contribute to triggering exocytosis. This Pongo abelii (Sumatran orangutan) protein is Synaptotagmin-10 (SYT10).